Consider the following 940-residue polypeptide: Gamma-aminobutyric acid type B receptor subunit 2 (940 aa).

Positions 1-40 (MASPPSSGQPRPPPPPPPPARLLLPLLLSLLLWLAPGAWG) are cleaved as a signal peptide. Over 41–482 (WTRGAPRPPP…LRKISLPLYS (442 aa)) the chain is Extracellular. N89 is a glycosylation site (N-linked (GlcNAc...) asparagine). 3 disulfide bridges follow: C107–C134, C236–C265, and C264–C301. N297, N388, N403, and N452 each carry an N-linked (GlcNAc...) asparagine glycan. The helical transmembrane segment at 483-503 (ILSALTILGMIMASAFLFFNI) threads the bilayer. Over 504–521 (KNRNQKLIKMSSPYMNNL) the chain is Cytoplasmic. Residues 522–542 (IILGGMLSYASIFLFGLDGSF) form a helical membrane-spanning segment. Over 543 to 550 (VSEKTFET) the chain is Extracellular. Residues 551–571 (LCTVRTWILTVGYTTAFGAMF) form a helical membrane-spanning segment. Residues 572–596 (AKTWRVHAIFKNVKMKKKIIKDQKL) are Cytoplasmic-facing. The helical transmembrane segment at 597–617 (LVIVGGMLLIDLCILICWQAV) threads the bilayer. Residues 618–653 (DPLRRTVERYSMEPDPAGRDISIRPLLEHCENTHMT) lie on the Extracellular side of the membrane. The helical transmembrane segment at 654-674 (IWLGIVYAYKGLLMLFGCFLA) threads the bilayer. The Cytoplasmic portion of the chain corresponds to 675 to 690 (WETRNVSIPALNDSKY). A helical membrane pass occupies residues 691 to 711 (IGMSVYNVGIMCIIGAAVSFL). The Extracellular portion of the chain corresponds to 712–719 (TRDQPNVQ). Residues 720–740 (FCIVALVIIFCSTITLCLVFV) form a helical membrane-spanning segment. Residues 741-940 (PKLITLRTNP…PSFRVMVSGL (200 aa)) are Cytoplasmic-facing. Positions 762–789 (TQNQKKEDSKTSTSVTSVNQASTSRLEG) are disordered. Polar residues predominate over residues 772–786 (TSTSVTSVNQASTSR). Residues S775 and S778 each carry the phosphoserine modification. A coiled-coil region spans residues 780 to 818 (NQASTSRLEGLQSENHRLRMKITELDKDLEEVTMQLQDT). Position 818 is a phosphothreonine (T818). A phosphoserine mark is found at S883, S892, S912, S915, S919, and S923.

Belongs to the G-protein coupled receptor 3 family. GABA-B receptor subfamily. As to quaternary structure, heterodimer of GABBR1 and GABBR2. Homodimers may form, but are inactive. Interacts (via C-terminus) with ATF4 (via leucine zipper domain). Interacts with KCTD8, KCTD12 and KCTD16; this interaction determines the pharmacology and kinetics of the receptor response, the KCTD proteins markedly accelerating the GABA-B response, although to different extents. In terms of tissue distribution, highly expressed in areas of the brain including thalamic nuclei, the hippocampus, cerebellar Purkinje cells and the medial habenula, and moderately expressed in the cerebral cortex, certain anterioventral thalamic nuclei, dorsal medial hypothalamic nucleus and suprachiasmatic nuclei. Also weakly expressed in the testis.

It localises to the cell membrane. It is found in the postsynaptic cell membrane. Its subcellular location is the perikaryon. The protein resides in the cell projection. The protein localises to the dendrite. Component of a heterodimeric G-protein coupled receptor for GABA, formed by GABBR1 and GABBR2. Within the heterodimeric GABA receptor, only GABBR1 seems to bind agonists, while GABBR2 mediates coupling to G proteins. Ligand binding causes a conformation change that triggers signaling via guanine nucleotide-binding proteins (G proteins) and modulates the activity of down-stream effectors, such as adenylate cyclase. Signaling inhibits adenylate cyclase, stimulates phospholipase A2, activates potassium channels, inactivates voltage-dependent calcium-channels and modulates inositol phospholipid hydrolysis. Plays a critical role in the fine-tuning of inhibitory synaptic transmission. Pre-synaptic GABA receptor inhibits neurotransmitter release by down-regulating high-voltage activated calcium channels, whereas postsynaptic GABA receptor decreases neuronal excitability by activating a prominent inwardly rectifying potassium (Kir) conductance that underlies the late inhibitory postsynaptic potentials. Not only implicated in synaptic inhibition but also in hippocampal long-term potentiation, slow wave sleep, muscle relaxation and antinociception. This chain is Gamma-aminobutyric acid type B receptor subunit 2 (Gabbr2), found in Rattus norvegicus (Rat).